The sequence spans 205 residues: 3-isopropylmalate dehydratase small subunit (205 aa).

The protein belongs to the LeuD family. LeuD type 1 subfamily. Heterodimer of LeuC and LeuD.

The catalysed reaction is (2R,3S)-3-isopropylmalate = (2S)-2-isopropylmalate. It participates in amino-acid biosynthesis; L-leucine biosynthesis; L-leucine from 3-methyl-2-oxobutanoate: step 2/4. Its function is as follows. Catalyzes the isomerization between 2-isopropylmalate and 3-isopropylmalate, via the formation of 2-isopropylmaleate. In Christiangramia forsetii (strain DSM 17595 / CGMCC 1.15422 / KT0803) (Gramella forsetii), this protein is 3-isopropylmalate dehydratase small subunit.